Consider the following 231-residue polypeptide: MASRRVLLKLSGESFGGGAPLVDPDVVSAIASEIVRVSKTIQIAIVVGGGNYFRGAELSRRGMARDRADYMGMLGTVINALALQDFLEQAGGDTRVQSAISMSQVAELYVPRRAERHLTKGRVVIFAAGAGMPYFSTDTVAVQRALEIKADIVLIAKNGVDGVYTDDPQINPNAKKIYKITYREALERGLRVVDSAALGLCMEHGLPMRVFGMESLRDAVSGLKVGTELSQ.

9-12 (KLSG) is a binding site for ATP. A UMP-binding site is contributed by glycine 49. Positions 50 and 54 each coordinate ATP. UMP contacts are provided by residues aspartate 69 and 130–137 (AGMPYFST). Positions 158, 164, and 167 each coordinate ATP.

This sequence belongs to the UMP kinase family. Homohexamer.

The protein localises to the cytoplasm. The enzyme catalyses UMP + ATP = UDP + ADP. Its pathway is pyrimidine metabolism; CTP biosynthesis via de novo pathway; UDP from UMP (UMPK route): step 1/1. Its activity is regulated as follows. Inhibited by UTP. Its function is as follows. Catalyzes the reversible phosphorylation of UMP to UDP. The sequence is that of Uridylate kinase from Tropheryma whipplei (strain Twist) (Whipple's bacillus).